The following is a 126-amino-acid chain: RutC family protein PH0854 (126 aa).

Belongs to the RutC family.

The chain is RutC family protein PH0854 from Pyrococcus horikoshii (strain ATCC 700860 / DSM 12428 / JCM 9974 / NBRC 100139 / OT-3).